The chain runs to 185 residues: Translation initiation factor IF-3 (185 aa).

Belongs to the IF-3 family. Monomer.

Its subcellular location is the cytoplasm. IF-3 binds to the 30S ribosomal subunit and shifts the equilibrium between 70S ribosomes and their 50S and 30S subunits in favor of the free subunits, thus enhancing the availability of 30S subunits on which protein synthesis initiation begins. The sequence is that of Translation initiation factor IF-3 from Rickettsia felis (strain ATCC VR-1525 / URRWXCal2) (Rickettsia azadi).